The following is a 353-amino-acid chain: Phosphoribosylformylglycinamidine cyclo-ligase (353 aa).

Belongs to the AIR synthase family.

The protein localises to the cytoplasm. The catalysed reaction is 2-formamido-N(1)-(5-O-phospho-beta-D-ribosyl)acetamidine + ATP = 5-amino-1-(5-phospho-beta-D-ribosyl)imidazole + ADP + phosphate + H(+). It participates in purine metabolism; IMP biosynthesis via de novo pathway; 5-amino-1-(5-phospho-D-ribosyl)imidazole from N(2)-formyl-N(1)-(5-phospho-D-ribosyl)glycinamide: step 2/2. The protein is Phosphoribosylformylglycinamidine cyclo-ligase of Magnetococcus marinus (strain ATCC BAA-1437 / JCM 17883 / MC-1).